A 430-amino-acid chain; its full sequence is MKETIDFLIDTVEARQVLDSRGNPTVEAEVFLECGASGRAIVPSGASTGAHEAHELRDGGSKYMGKGVLNAVNKIHETISPALCGLSSLDQTAVDKLMIEIDGTPNKSNLGANSILAVSLATARASANALDIPLYRYLGDPLSNLLPVPLMNVINGGAHAPNSLDFQEFMLVPHGVNNFSESLRMGTEIFHSLKSLLDQKGLSTAVGDEGGFAPNLSSSVEAGDLLLEAIQKAGFKPGEQVSLALDAASTEFYRDGIYKYEGKSLNSSEMISYLSRLVSNYPIVSIEDGLAEDDWEGWSELNKELGNKVQLVGDDLFVTNTERLRKGIIEKSANSILIKVNQIGTLTETLEAIELAKMSGFTSVISHRSGETEDTTIADLSVATRSGQIKTGSLSRSERIAKYNRLLKIEEELGNQARFAGALGLGPKNI.

Glutamine 167 contributes to the (2R)-2-phosphoglycerate binding site. Residue glutamate 209 is the Proton donor of the active site. The Mg(2+) site is built by aspartate 246, glutamate 287, and aspartate 314. (2R)-2-phosphoglycerate is bound by residues lysine 339, arginine 368, serine 369, and lysine 390. The active-site Proton acceptor is lysine 339.

Belongs to the enolase family. Requires Mg(2+) as cofactor.

It is found in the cytoplasm. It localises to the secreted. The protein localises to the cell surface. The enzyme catalyses (2R)-2-phosphoglycerate = phosphoenolpyruvate + H2O. It functions in the pathway carbohydrate degradation; glycolysis; pyruvate from D-glyceraldehyde 3-phosphate: step 4/5. Its function is as follows. Catalyzes the reversible conversion of 2-phosphoglycerate (2-PG) into phosphoenolpyruvate (PEP). It is essential for the degradation of carbohydrates via glycolysis. The protein is Enolase of Prochlorococcus marinus (strain AS9601).